Consider the following 100-residue polypeptide: Integration host factor subunit alpha (100 aa).

Belongs to the bacterial histone-like protein family. Heterodimer of an alpha and a beta chain.

Functionally, this protein is one of the two subunits of integration host factor, a specific DNA-binding protein that functions in genetic recombination as well as in transcriptional and translational control. This chain is Integration host factor subunit alpha, found in Erythrobacter litoralis (strain HTCC2594).